A 302-amino-acid chain; its full sequence is tRNA-cytidine(32) 2-sulfurtransferase (302 aa).

Residues 43–48 carry the PP-loop motif motif; the sequence is SGGKDS. Residues C118, C121, and C209 each contribute to the [4Fe-4S] cluster site.

Belongs to the TtcA family. Homodimer. Mg(2+) serves as cofactor. The cofactor is [4Fe-4S] cluster.

The protein resides in the cytoplasm. The enzyme catalyses cytidine(32) in tRNA + S-sulfanyl-L-cysteinyl-[cysteine desulfurase] + AH2 + ATP = 2-thiocytidine(32) in tRNA + L-cysteinyl-[cysteine desulfurase] + A + AMP + diphosphate + H(+). Its pathway is tRNA modification. Functionally, catalyzes the ATP-dependent 2-thiolation of cytidine in position 32 of tRNA, to form 2-thiocytidine (s(2)C32). The sulfur atoms are provided by the cysteine/cysteine desulfurase (IscS) system. This is tRNA-cytidine(32) 2-sulfurtransferase from Polynucleobacter necessarius subsp. necessarius (strain STIR1).